Reading from the N-terminus, the 308-residue chain is Secreted frizzled-related protein 1 (308 aa).

The first 25 residues, 1 to 25 (MGGGRWAAAGALLALAAGLLAAGSA), serve as a signal peptide directing secretion. The FZ domain maps to 47–163 (TKPPQCVDIP…FPEGDVCIAM (117 aa)). 5 cysteine pairs are disulfide-bonded: Cys-52/Cys-115, Cys-62/Cys-108, Cys-99/Cys-134, Cys-123/Cys-160, and Cys-127/Cys-151. The N-linked (GlcNAc...) asparagine glycan is linked to Asn-167. Intrachain disulfides connect Cys-180-Cys-250, Cys-183-Cys-252, and Cys-197-Cys-300. The region spanning 180–300 (CPPCDNELKS…FMKKMKNHEC (121 aa)) is the NTR domain.

Belongs to the secreted frizzled-related protein (sFRP) family. In terms of assembly, interacts with WNT1, WNT2, WNT4, WNT8, MYOC and FRZD6. As to expression, highest levels in aortic endothelium, heart, spleen and eye. Lower levels in lung, brain and kidney. Weak expression in liver, skeletal muscle and the medial layer of the aorta. In the cortical brain, localized to neurons and small blood vessels. In the retina, localized to the inner and outer nuclear layers with high expression in the neuronal cell bodies. In the heart, restricted to myocytes. In lung, highest expression found in the epithelium of terminal bronchioles. In kidney, localized to the epithelium of collecting ducts of the medulla and, in spleen, expression restricted to the red pulp in cells associated with the sinuses.

It localises to the secreted. In terms of biological role, soluble frizzled-related proteins (sFRPS) function as modulators of Wnt signaling through direct interaction with Wnts. They have a role in regulating cell growth and differentiation in specific cell types. SFRP1 decreases intracellular beta-catenin levels. Has antiproliferative effects on vascular cells, in vitro and in vivo, and can induce, in vivo, an angiogenic response. In vascular cell cycle, delays the G1 phase and entry into the S phase. In kidney development, inhibits tubule formation and bud growth in metanephroi. Inhibits WNT1/WNT4-mediated TCF-dependent transcription. The protein is Secreted frizzled-related protein 1 (SFRP1) of Bos taurus (Bovine).